The chain runs to 768 residues: Vitamin B12-dependent ribonucleoside-diphosphate reductase (768 aa).

The 95-residue stretch at 3–97 (KEVVKRDGTV…LYREKRRAIR (95 aa)) folds into the ATP-cone domain. Residues Ser-234, 249 to 250 (AC), Gly-278, 432 to 436 (NPCGE), and 579 to 583 (PTGTI) contribute to the substrate site. Cys-250 and Cys-445 are oxidised to a cystine. The active-site Proton acceptor is the Asn-432. The active-site Cysteine radical intermediate is the Cys-434. Glu-436 (proton acceptor) is an active-site residue.

The protein belongs to the ribonucleoside diphosphate reductase class-2 family. Monomer. Requires adenosylcob(III)alamin as cofactor.

The catalysed reaction is a 2'-deoxyribonucleoside 5'-diphosphate + [thioredoxin]-disulfide + H2O = a ribonucleoside 5'-diphosphate + [thioredoxin]-dithiol. Its function is as follows. Provides the precursors necessary for DNA synthesis. Catalyzes the biosynthesis of deoxyribonucleotides from the corresponding ribonucleotides. The polypeptide is Vitamin B12-dependent ribonucleoside-diphosphate reductase (Thermoplasma acidophilum (strain ATCC 25905 / DSM 1728 / JCM 9062 / NBRC 15155 / AMRC-C165)).